A 295-amino-acid polypeptide reads, in one-letter code: METIIEEYLRFIQIEKGLSSNTIGAYRRDLKKYQDYMTEHHISHIDFIDRQLIQECLGHLIDQGQSAKSIARFISTIRSFHQFAIREKYAAKDPTVLLDSPKYDKKLPDVLNVDEVLALLETPDLNKINGYRDRTMLELLYATGMRVSELIHLELENVNLIMGFVRVFGKGDKERIVPLGDAVIEYLTTYIETIRPQLLKKTVTEVLFLNMHGKPLSRQAIWKMIKQNGVKANIKKTLTPHTLRHSFATHLLENGADLRAVQEMLGHSDISTTQLYTHVSKSQIRKMYNQFHPRA.

The 85-residue stretch at Met1–Ile85 folds into the Core-binding (CB) domain. The Tyr recombinase domain occupies Lys106–Asn289. Active-site residues include Arg146, Lys170, His241, Arg244, and His267. Tyr276 (O-(3'-phospho-DNA)-tyrosine intermediate) is an active-site residue.

It belongs to the 'phage' integrase family. XerD subfamily. Forms a cyclic heterotetrameric complex composed of two molecules of XerC and two molecules of XerD.

It localises to the cytoplasm. Site-specific tyrosine recombinase, which acts by catalyzing the cutting and rejoining of the recombining DNA molecules. The XerC-XerD complex is essential to convert dimers of the bacterial chromosome into monomers to permit their segregation at cell division. It also contributes to the segregational stability of plasmids. This chain is Tyrosine recombinase XerD, found in Staphylococcus aureus (strain COL).